Reading from the N-terminus, the 176-residue chain is Ribosome maturation factor RimM (176 aa).

A PRC barrel domain is found at 100–173 (PGEFHLLDLL…WLMVCPPPGL (74 aa)).

This sequence belongs to the RimM family. Binds ribosomal protein uS19.

It localises to the cytoplasm. Functionally, an accessory protein needed during the final step in the assembly of 30S ribosomal subunit, possibly for assembly of the head region. Essential for efficient processing of 16S rRNA. May be needed both before and after RbfA during the maturation of 16S rRNA. It has affinity for free ribosomal 30S subunits but not for 70S ribosomes. This is Ribosome maturation factor RimM from Prochlorococcus marinus (strain SARG / CCMP1375 / SS120).